We begin with the raw amino-acid sequence, 762 residues long: cGMP-dependent protein kinase 2 (762 aa).

The segment at methionine 1 to leucine 26 is disordered. Glycine 2 is lipidated: N-myristoyl glycine. 2 positions are modified to phosphoserine: serine 110 and serine 117. Residues arginine 118–lysine 138 are disordered. A cGMP-binding, high affinity; cAMP-binding, moderate affinity region spans residues phenylalanine 168–serine 283. Residues glycine 232 to alanine 235, arginine 242 to threonine 243, lysine 347, glycine 356 to alanine 359, arginine 366 to serine 367, aspartate 412, and arginine 415 contribute to the 3',5'-cyclic GMP site. Residues leucine 286–histidine 416 form a cGMP-binding, high affinity; cAMP-binding, low affinity region. Residue serine 431 is modified to Phosphoserine. The region spanning leucine 453–leucine 711 is the Protein kinase domain. ATP is bound by residues leucine 459–valine 467 and lysine 482. Aspartate 576 acts as the Proton acceptor in catalysis. Position 609 is a phosphothreonine (threonine 609). The 51-residue stretch at asparagine 712–phenylalanine 762 folds into the AGC-kinase C-terminal domain. A disordered region spans residues tyrosine 740–phenylalanine 762.

The protein belongs to the protein kinase superfamily. AGC Ser/Thr protein kinase family. cGMP subfamily. Interacts with GRIA1/GLUR1. Post-translationally, myristoylation mediates membrane localization.

It is found in the apical cell membrane. The protein resides in the cell membrane. It catalyses the reaction L-seryl-[protein] + ATP = O-phospho-L-seryl-[protein] + ADP + H(+). It carries out the reaction L-threonyl-[protein] + ATP = O-phospho-L-threonyl-[protein] + ADP + H(+). Its activity is regulated as follows. Binding of cGMP results in enzyme activation. In terms of biological role, crucial regulator of intestinal secretion and bone growth. Phosphorylates and activates CFTR on the plasma membrane. Plays a key role in intestinal secretion by regulating cGMP-dependent translocation of CFTR in jejunum. Acts downstream of NMDAR to activate the plasma membrane accumulation of GRIA1/GLUR1 in synapse and increase synaptic plasticity. Phosphorylates GRIA1/GLUR1 at Ser-863. Acts as a regulator of gene expression and activator of the extracellular signal-regulated kinases MAPK3/ERK1 and MAPK1/ERK2 in mechanically stimulated osteoblasts. Under fluid shear stress, mediates ERK activation and subsequent induction of FOS, FOSL1/FRA1, FOSL2/FRA2 and FOSB that play a key role in the osteoblast anabolic response to mechanical stimulation. The polypeptide is cGMP-dependent protein kinase 2 (Prkg2) (Mus musculus (Mouse)).